We begin with the raw amino-acid sequence, 319 residues long: GCN5-related N-acetyltransferase 5, chloroplastic (319 aa).

The N-terminal 55 residues, 1–55, are a transit peptide targeting the chloroplast; it reads MAALSISLAFSVDSLKPTQSTKFGFSSSSHRYPLLYSCKSHRSNLRFAFPPSSVS. Residues 109–297 form the N-acetyltransferase domain; the sequence is MWVRVMRHEE…KHLMRKKLLP (189 aa). Acetyl-CoA-binding positions include 218–220, 226–231, 258–260, and Y265; these read MTV, RRGIGW, and DEA. Residue Y265 is the Proton donor of the active site.

Belongs to the acetyltransferase family. GNAT subfamily. Oligomer. Post-translationally, autoacetylated. As to expression, expressed in green tissues.

It localises to the plastid. The protein localises to the chloroplast. The catalysed reaction is an N-terminal L-alpha-aminoacyl-[protein] + acetyl-CoA = N-terminal N(alpha)-acetyl-L-alpha-aminoacyl-[protein] + CoA + H(+). The enzyme catalyses L-lysyl-[protein] + acetyl-CoA = N(6)-acetyl-L-lysyl-[protein] + CoA + H(+). It carries out the reaction N-terminal L-alanyl-[protein] + acetyl-CoA = N-terminal N(alpha)-acetyl-L-alanyl-[protein] + CoA + H(+). It catalyses the reaction N-terminal L-seryl-[protein] + acetyl-CoA = N-terminal N(alpha)-acetyl-L-seryl-[protein] + CoA + H(+). The catalysed reaction is N-terminal L-methionyl-[protein] + acetyl-CoA = N-terminal N(alpha)-acetyl-L-methionyl-[protein] + CoA + H(+). The enzyme catalyses N-terminal L-valyl-[protein] + acetyl-CoA = N-terminal N(alpha)-acetyl-L-valyl-[protein] + CoA + H(+). It carries out the reaction N-terminal L-threonyl-[protein] + acetyl-CoA = N-terminal N(alpha)-acetyl-L-threonyl-[protein] + CoA + H(+). Its function is as follows. Protein acetyltransferase with dual specificity triggering both N-alpha-acetylation (NTA), with a large spectrum of modified N-termini, including methionine, alanine, serine and to a lower extent threonine and valine as substrates, and epsilon-lysine acetylation (KA). The chain is GCN5-related N-acetyltransferase 5, chloroplastic from Arabidopsis thaliana (Mouse-ear cress).